The chain runs to 950 residues: Oxysterol-binding protein-related protein 1 (950 aa).

Residues 1-237 form an interaction with RAB7A region; it reads MNTEAEQQLL…NKVIYKALKR (237 aa). ANK repeat units lie at residues 47–76, 80–109, and 175–204; these read LGWTPLHLACYFGHRQVVQDLLKAGAEVNV, MGDTPLHRAAFTGRKELVMLLLEYNADTTI, and LGNTPLHCAAYRAHKQCALKLLRSGADPNL. A PH domain is found at 235–334; sequence LKRYEGPLWK…WLEAIEEHSA (100 aa). Positions 430 to 463 form a coiled coil; sequence NFKLEQEQEKNKILSEALETLATEHHELEQSLVK. The FFAT signature appears at 469-485; sequence SILSEDEFYDALSDSES. The residue at position 499 (serine 499) is a Phosphoserine. Over residues 501-521 the composition is skewed to basic and acidic residues; that stretch reads EEEGEHLGSRKHRMSEEKDCG. 3 disordered regions span residues 501–527, 795–816, and 881–913; these read EEEGEHLGSRKHRMSEEKDCGGGDALS, KKNTEEKKNSKQMSTSEELDEM, and MENGEIDQASEEKKRLEEKQRAARKNRSKSEED. Residues 877–913 are a coiled coil; it reads DIRAMENGEIDQASEEKKRLEEKQRAARKNRSKSEED. The span at 890–901 shows a compositional bias: basic and acidic residues; the sequence is SEEKKRLEEKQR.

Belongs to the OSBP family. As to quaternary structure, interacts (via FFAT motif) with VAPA and VAPB. Interacts with the GTP-bound form of RAB7A. Interacts with OAS1B. Interacts (via FFAT motif) with MOSPD2 (via MSP domain).

Its subcellular location is the late endosome. Functionally, binds phospholipids; exhibits strong binding to phosphatidic acid and weak binding to phosphatidylinositol 3-phosphate. Stabilizes GTP-bound RAB7A on late endosomes/lysosomes and alters functional properties of late endocytic compartments via its interaction with RAB7A. Binds 25-hydroxycholesterol and cholesterol. The sequence is that of Oxysterol-binding protein-related protein 1 from Homo sapiens (Human).